Here is an 822-residue protein sequence, read N- to C-terminus: MQGTPPTMKIIENILKNHFSQPLSQNISALTNNYITEVQNFFPLSKNTNLVVGQILNFQKIQGSQKLNLVEVNTGTKVVKIVCGASNLQNGKKVIVASEGSFLEGINATLKNKKIYGVFSEGMLCALEELGISTKFLTPQEQEGIYLFDDPNDQIALGSNALIPLGLDCFILELGLTPNRVGDLLSHLGFAKDLKAVLSSQSSNNNQETKSTNYKTKNSEDQTNPDFFANLPQSPLKVQIENDSCYEYNACILENIKIKPSPLWLRNALLQSGINPINNVVDITNLILIEYGIPLHAFDSENIKQIKVRKALPQENITTLNQNDFVLDENDLVITDGKKAIALAGIVGLLESSIKPTTTKIILEAAYFSPQTIAQTCQKLKTKTESSLRFERGIDQSLIPLAFQKACQLLVTLADGKITYQPVITKQKNRTNPTISLNLDFVTRKIGVSLCPTQIKNWLLNLDYQIHTSKHLGPQNKNEQLNLQAPLRRYDVKIKEDVISDLTRLYGCHKLPPQTIQIPTQGKLTLKQKNIRELRKLLVNLGFYETITYSLISSEMFEAFTPQKPFIKIMNPLSQDKMILRQSLLSSLVEVLSYQHKRQTFDTAFFEIGKTYFPNQETLSLAFALNGHFLNSLWHKQDVSSSFFVTKGILEKISAFLGITLTYQKTQQHSNFHPGMQANLLFNNQIIGVIGKTHPQLNTKYHLKESFLCELFLTDEILNTTKTFTFQPIPKFPTVIRDLAFLVDTKYSFYQIEQTIKQTTPFDLIKCELFDVYQIPKTKEKHSLALRLFFHNLDKNLEKQDVEHCMEKITSNLIKHFHIEIR.

One can recognise a tRNA-binding domain in the interval 44-162 (LSKNTNLVVG…DQIALGSNAL (119 aa)). The segment at 201-224 (QSSNNNQETKSTNYKTKNSEDQTN) is disordered. In terms of domain architecture, B5 spans 430-513 (RTNPTISLNL…RLYGCHKLPP (84 aa)). Asp491, Asp497, and Asp501 together coordinate Mg(2+). The region spanning 730 to 822 (PKFPTVIRDL…LIKHFHIEIR (93 aa)) is the FDX-ACB domain.

This sequence belongs to the phenylalanyl-tRNA synthetase beta subunit family. Type 1 subfamily. As to quaternary structure, tetramer of two alpha and two beta subunits. Mg(2+) serves as cofactor.

The protein localises to the cytoplasm. The catalysed reaction is tRNA(Phe) + L-phenylalanine + ATP = L-phenylalanyl-tRNA(Phe) + AMP + diphosphate + H(+). The chain is Phenylalanine--tRNA ligase beta subunit from Onion yellows phytoplasma (strain OY-M).